The following is a 435-amino-acid chain: Xylose isomerase (435 aa).

Mg(2+) contacts are provided by D306 and D308.

The protein belongs to the xylose isomerase family. Homotetramer. Requires Mg(2+) as cofactor.

It is found in the cytoplasm. It carries out the reaction alpha-D-xylose = alpha-D-xylulofuranose. The polypeptide is Xylose isomerase (Allorhizobium ampelinum (strain ATCC BAA-846 / DSM 112012 / S4) (Agrobacterium vitis (strain S4))).